The sequence spans 590 residues: UvrABC system protein C (590 aa).

One can recognise a GIY-YIG domain in the interval 15-92 (DLPGCYMMKD…IQKHKPYYNI (78 aa)). The 36-residue stretch at 197–232 (SKIKKELEQKMETASENLEFERAAEIRDQIHYVEMT) folds into the UVR domain.

This sequence belongs to the UvrC family. As to quaternary structure, interacts with UvrB in an incision complex.

It is found in the cytoplasm. In terms of biological role, the UvrABC repair system catalyzes the recognition and processing of DNA lesions. UvrC both incises the 5' and 3' sides of the lesion. The N-terminal half is responsible for the 3' incision and the C-terminal half is responsible for the 5' incision. The sequence is that of UvrABC system protein C from Ligilactobacillus salivarius (strain UCC118) (Lactobacillus salivarius).